Reading from the N-terminus, the 446-residue chain is Argininosuccinate lyase (446 aa).

This sequence belongs to the lyase 1 family. Argininosuccinate lyase subfamily.

The protein resides in the cytoplasm. The catalysed reaction is 2-(N(omega)-L-arginino)succinate = fumarate + L-arginine. It participates in amino-acid biosynthesis; L-arginine biosynthesis; L-arginine from L-ornithine and carbamoyl phosphate: step 3/3. This Phocaeicola vulgatus (strain ATCC 8482 / DSM 1447 / JCM 5826 / CCUG 4940 / NBRC 14291 / NCTC 11154) (Bacteroides vulgatus) protein is Argininosuccinate lyase.